Here is a 597-residue protein sequence, read N- to C-terminus: Elongation factor 4 (597 aa).

One can recognise a tr-type G domain in the interval 2–184 (KNIRNFSIIA…RLVRDIPAPE (183 aa)). GTP is bound by residues 14 to 19 (DHGKST) and 131 to 134 (NKID).

It belongs to the TRAFAC class translation factor GTPase superfamily. Classic translation factor GTPase family. LepA subfamily.

It is found in the cell inner membrane. It carries out the reaction GTP + H2O = GDP + phosphate + H(+). Functionally, required for accurate and efficient protein synthesis under certain stress conditions. May act as a fidelity factor of the translation reaction, by catalyzing a one-codon backward translocation of tRNAs on improperly translocated ribosomes. Back-translocation proceeds from a post-translocation (POST) complex to a pre-translocation (PRE) complex, thus giving elongation factor G a second chance to translocate the tRNAs correctly. Binds to ribosomes in a GTP-dependent manner. The protein is Elongation factor 4 of Edwardsiella ictaluri (strain 93-146).